Reading from the N-terminus, the 527-residue chain is ATP synthase subunit alpha (527 aa).

Residue 172–179 (GDRQTGKT) participates in ATP binding.

The protein belongs to the ATPase alpha/beta chains family. As to quaternary structure, F-type ATPases have 2 components, CF(1) - the catalytic core - and CF(0) - the membrane proton channel. CF(1) has five subunits: alpha(3), beta(3), gamma(1), delta(1), epsilon(1). CF(0) has three main subunits: a(1), b(2) and c(9-12). The alpha and beta chains form an alternating ring which encloses part of the gamma chain. CF(1) is attached to CF(0) by a central stalk formed by the gamma and epsilon chains, while a peripheral stalk is formed by the delta and b chains.

It is found in the cell inner membrane. The catalysed reaction is ATP + H2O + 4 H(+)(in) = ADP + phosphate + 5 H(+)(out). Functionally, produces ATP from ADP in the presence of a proton gradient across the membrane. The alpha chain is a regulatory subunit. The polypeptide is ATP synthase subunit alpha (Bacteroides thetaiotaomicron (strain ATCC 29148 / DSM 2079 / JCM 5827 / CCUG 10774 / NCTC 10582 / VPI-5482 / E50)).